The following is a 186-amino-acid chain: MIKMRDIIREGNHTLRAEAKQVKFPLSEADQKLANDMMEYLENSQDPELAKKYGLRAGVGLAAPQVDVSEQMAAVLVPSENEDDEPVFKDVIINPVIISHSVQPGALTEGEGCLSVDRDIAGYVIRHDRITLRYYNMAGEEKKIRLKNYPAIVCQHEIDHLHGILFYDHINGDNPFAADDDLVLIS.

C113 and H156 together coordinate Fe cation. E157 is a catalytic residue. H160 is a binding site for Fe cation.

It belongs to the polypeptide deformylase family. The cofactor is Fe(2+).

It catalyses the reaction N-terminal N-formyl-L-methionyl-[peptide] + H2O = N-terminal L-methionyl-[peptide] + formate. In terms of biological role, removes the formyl group from the N-terminal Met of newly synthesized proteins. Requires at least a dipeptide for an efficient rate of reaction. N-terminal L-methionine is a prerequisite for activity but the enzyme has broad specificity at other positions. This is Peptide deformylase from Lactiplantibacillus plantarum (strain ATCC BAA-793 / NCIMB 8826 / WCFS1) (Lactobacillus plantarum).